The following is a 220-amino-acid chain: MRQITNLGRNIENKSFSIIDEEAGPHSFAQEEWEVVRRIIHATADFDYKNITKIHPQAIDSGIQALKKGCPIVCDVQMILSGLNPERLKVYGCKTYCFISDEDVIENAKRKNSTRAIESIQKANSFNLLNESIIVIGNAPTALLEIEKLIRQEGIKPALIVGVPVGFVSAKESKESILKLEYYNVTSIPYILTMGRKGGSTIAVAILHALLLLSSKRGER.

Substrate contacts are provided by Ser15 and Arg38. Residue His41 is the Proton donor/acceptor of the active site.

It belongs to the CobH/CbiC family. In terms of assembly, homodimer.

It catalyses the reaction Co-precorrin-8X = cob(II)yrinate. The protein operates within cofactor biosynthesis; adenosylcobalamin biosynthesis; cob(II)yrinate a,c-diamide from sirohydrochlorin (anaerobic route): step 9/10. Functionally, catalyzes the conversion of cobalt-precorrin-8 to cobyrinate. The chain is Cobalt-precorrin-8 methylmutase (cbiC) from Leptospira interrogans serogroup Icterohaemorrhagiae serovar Lai (strain 56601).